The sequence spans 211 residues: uncharacterized protein (211 aa).

Residues 155-211 (AAENASEEGDKKQIITDSGKLPETEELTETTNEDLDIKQFSPYSSESSANVSSYNKS) form a disordered region. A compositionally biased stretch (acidic residues) spans 178–188 (TEELTETTNED). The span at 195–211 (SPYSSESSANVSSYNKS) shows a compositional bias: low complexity.

This is an uncharacterized protein from Schizosaccharomyces pombe (strain 972 / ATCC 24843) (Fission yeast).